Reading from the N-terminus, the 50-residue chain is Protein PsbN (50 aa).

A helical membrane pass occupies residues 14-34 (VAVTILAILLALTGFGLWTAF).

It belongs to the PsbN family.

Its subcellular location is the cellular thylakoid membrane. May play a role in photosystem I and II biogenesis. The chain is Protein PsbN from Prochlorococcus marinus (strain MIT 9312).